Reading from the N-terminus, the 139-residue chain is Large ribosomal subunit protein uL16 (139 aa).

This sequence belongs to the universal ribosomal protein uL16 family. In terms of assembly, part of the 50S ribosomal subunit.

Functionally, binds 23S rRNA and is also seen to make contacts with the A and possibly P site tRNAs. The chain is Large ribosomal subunit protein uL16 from Treponema pallidum (strain Nichols).